We begin with the raw amino-acid sequence, 177 residues long: MATVNEFRGAMSRGGGVQRQHRWRVTISFPSFAASADQTRDVCLLAVTTNTPTGQLGEILVPWGGRELPFPGDRRFEALPITFINVVNNGPYNSMEVWQQYINGSESNRASANPDEYFRDVVLELLDANDNVTKTWTLQGAWPQNLGQLELDMSAMDSYTQFTCDLRYFQAVSDRSR.

This sequence belongs to the T4-like viruses Gp19 protein family.

It localises to the virion. Its function is as follows. Structural component of the bacteriophage tail which consists of a contractile sheath, a tube and a baseplate. The central cylindrical segment of the tail consists of a rigid tube, composed of multiple copies of the tail tube protein. During infection, contraction of the sheath drives the central tube through the host outer membrane, creating a channel for DNA ejection from the capsid into the host cell. The chain is Tail tube protein from Serratia marcescens (Serratia marcescens bacteriophage KSP90).